Here is a 469-residue protein sequence, read N- to C-terminus: MLPTLVLVGRPNVGKSTLFNRLTGTRDALVHDLPGMTRDRHYGRGRIGGKPYLVVDTGGLEPVVKDGILAEMARQTLQAIDEADAIIFMVDARAGVTPQDKVIADRLRRVTSPVLLAVNKAEGMNRAVVTAEFHELGLGEPLAISGAHGDGIADLVAEALAPFPEEEEASDDFGVPKIALVGRPNVGKSTLVNALVGAERVIAFDQPGTTRDSIYVDFERGGKPYVLIDTAGVRRRGKVFETVEKFSVIKTLQAIEDANVVVLVLDARENISEQDAHLAGFVLETGRALVVAINKWDGLSAEQRDDVKRDIGRKLAFLDFARFNYISALKAKGLENLLKDIEAAHAAAFIKLSTPKLTRVLEMAVEQHAPPKNGLFRPKPRYAHQGGKNPPVIVLHGNALEGLRDDYKRYLESSFRKAFKLQGTPLRIQIKEDEGKNPFEGKKRAPLSESEATRMRRKKRVRRKVYGAD.

EngA-type G domains are found at residues 3 to 167 (PTLV…PEEE) and 176 to 349 (PKIA…AAAF). GTP is bound by residues 9 to 16 (GRPNVGKS), 56 to 60 (DTGGL), 119 to 122 (NKAE), 182 to 189 (GRPNVGKS), 229 to 233 (DTAGV), and 294 to 297 (NKWD). The KH-like domain maps to 350 to 436 (IKLSTPKLTR…RIQIKEDEGK (87 aa)). Residues 432–443 (EDEGKNPFEGKK) are compositionally biased toward basic and acidic residues. The segment at 432-469 (EDEGKNPFEGKKRAPLSESEATRMRRKKRVRRKVYGAD) is disordered. Basic residues predominate over residues 455-469 (MRRKKRVRRKVYGAD).

Belongs to the TRAFAC class TrmE-Era-EngA-EngB-Septin-like GTPase superfamily. EngA (Der) GTPase family. As to quaternary structure, associates with the 50S ribosomal subunit.

In terms of biological role, GTPase that plays an essential role in the late steps of ribosome biogenesis. The polypeptide is GTPase Der (Thiobacillus denitrificans (strain ATCC 25259 / T1)).